A 702-amino-acid chain; its full sequence is MADS-box MEF2 type transcription factor MIG1 (702 aa).

Positions 1 to 61 (MGRRKIEIKA…KKLYEYSSGD (61 aa)) constitute an MADS-box domain. Disordered regions lie at residues 73 to 608 (GGAT…NIDT) and 658 to 702 (PSFL…KVDS). Acidic residues predominate over residues 86–96 (GGDDDDEEEGD). Positions 132 to 144 (ASPPIPNGVPFPP) are enriched in pro residues. A compositionally biased stretch (low complexity) spans 145–155 (HGHGVPRGHTP). A compositionally biased stretch (polar residues) spans 180-195 (GSPQVNGFGFGQQQSM). The segment covering 201–241 (TTMPPHMPPQMAPGPPFPYPQHPQHPPHPPHPPHPPHPQQP) has biased composition (pro residues). Composition is skewed to low complexity over residues 273 to 284 (PMGMQRHSVSPP), 326 to 343 (ESPQQIEPPQHQHQQQPE), and 350 to 371 (EQQQQQQQSQQSQQPQEPQSEP). The span at 456–465 (VDESTSNASE) shows a compositional bias: polar residues. Low complexity-rich tracts occupy residues 487-512 (RASISSVSSAPESAPAPPSRSNSLRA) and 530-553 (DGSGSATAESASSAQGGASTDATS). Positions 554 to 567 (QSTRQNDSHSSTNM) are enriched in polar residues. Residues 587–600 (PPNPFAPKRPPQHP) are compositionally biased toward pro residues. Residues 693-702 (NEPKRVKVDS) show a composition bias toward basic and acidic residues.

The protein belongs to the MEF2 family. Interacts with MAPK MPS1.

It is found in the nucleus. In terms of biological role, transcription factor acting downstream of the MPS1 MAP kinase (MAPK) cascade during conidiation and plant infection. Required for overcoming plant defense responses and the differentiation of secondary infectious hyphae in live plant cells. The sequence is that of MADS-box MEF2 type transcription factor MIG1 from Pyricularia oryzae (Rice blast fungus).